The sequence spans 131 residues: Small ribosomal subunit protein uS8 (131 aa).

This sequence belongs to the universal ribosomal protein uS8 family. As to quaternary structure, part of the 30S ribosomal subunit. Contacts proteins S5 and S12.

In terms of biological role, one of the primary rRNA binding proteins, it binds directly to 16S rRNA central domain where it helps coordinate assembly of the platform of the 30S subunit. This chain is Small ribosomal subunit protein uS8, found in Acidovorax sp. (strain JS42).